The chain runs to 314 residues: Formate-nitrite transporter (314 aa).

The Cytoplasmic segment spans residues methionine 1–alanine 47. A helical membrane pass occupies residues isoleucine 48–phenylalanine 68. The Extracellular segment spans residues tyrosine 69–glycine 78. Residues isoleucine 79 to alanine 99 form a helical membrane-spanning segment. At threonine 100–arginine 128 the chain is on the cytoplasmic side. Residues valine 129 to serine 149 form a helical membrane-spanning segment. At histidine 150–cysteine 185 the chain is on the extracellular side. The helical transmembrane segment at isoleucine 186–isoleucine 206 threads the bilayer. Residues lysine 207 to glycine 211 lie on the Cytoplasmic side of the membrane. A helical transmembrane segment spans residues methionine 212 to isoleucine 232. The Extracellular segment spans residues alanine 233–asparagine 257. A helical membrane pass occupies residues leucine 258–phenylalanine 278. The Cytoplasmic portion of the chain corresponds to tyrosine 279 to asparagine 314.

It belongs to the FNT transporter (TC 1.A.16) family. As to quaternary structure, homopentamer.

It is found in the cell membrane. The protein localises to the vacuole membrane. It carries out the reaction (S)-lactate(in) + H(+)(in) = (S)-lactate(out) + H(+)(out). The catalysed reaction is formate(in) + H(+)(in) = formate(out) + H(+)(out). It catalyses the reaction pyruvate(out) + H(+)(out) = pyruvate(in) + H(+)(in). The enzyme catalyses acetate(out) + H(+)(out) = acetate(in) + H(+)(in). Its activity is regulated as follows. Inhibited by the Malaria Box compound MMV007839 and its derivatives BH296 and BH267.meta. Functionally, monocarboxylate-proton symporter that mediates the efflux of the waste product lactate in the intraerythrocytic parasites; active in acidic-to-neutral pH range. Transports L-lactate. The protein is Formate-nitrite transporter of Plasmodium knowlesi (strain H).